The chain runs to 336 residues: Terephthalate 1,2-dioxygenase, reductase component 2 (336 aa).

Residues 3–91 (HQIHIHDSDI…DIRIHPSSFR (89 aa)) enclose the 2Fe-2S ferredoxin-type domain. Residues Cys37, Cys42, Cys45, and Cys75 each coordinate [2Fe-2S] cluster. An FAD-binding FR-type domain is found at 98–197 (RKRFTAKVYS…ELPFGSIALK (100 aa)).

Monomer. Part of a multicomponent enzyme system composed of a reductase (TphA1I or TphA1II) and a two-subunit oxygenase component (TphA2I or TphA2II and TphA3I or TphA3II). Requires FAD as cofactor. The cofactor is [2Fe-2S] cluster.

It catalyses the reaction terephthalate + NADH + O2 + H(+) = (3S,4R)-3,4-dihydroxycyclohexa-1,5-diene-1,4-dicarboxylate + NAD(+). Component of the terephthalate 1,2-dioxygenase multicomponent enzyme system which catalyzes the dioxygenation of terephthalate (TER/TPA) to 1,2-dihydroxy-3,5-cyclohexadiene-1,4-dicarboxylic acid (DCD). TphA1 probably reduces TphA2A3. It can also use 2,5-dicarboxypyridine (PDC) and 1,4-napthalenedicarboxylic acid (NDC) as substrates, and preferentially uses NADPH which is the physiological electron donor. This is Terephthalate 1,2-dioxygenase, reductase component 2 (tphA1II) from Comamonas sp.